We begin with the raw amino-acid sequence, 185 residues long: Ribosome-recycling factor (185 aa).

The protein belongs to the RRF family.

The protein localises to the cytoplasm. Its function is as follows. Responsible for the release of ribosomes from messenger RNA at the termination of protein biosynthesis. May increase the efficiency of translation by recycling ribosomes from one round of translation to another. The sequence is that of Ribosome-recycling factor from Shewanella sediminis (strain HAW-EB3).